A 200-amino-acid chain; its full sequence is 3-isopropylmalate dehydratase small subunit (200 aa).

This sequence belongs to the LeuD family. LeuD type 1 subfamily. As to quaternary structure, heterodimer of LeuC and LeuD.

It catalyses the reaction (2R,3S)-3-isopropylmalate = (2S)-2-isopropylmalate. Its pathway is amino-acid biosynthesis; L-leucine biosynthesis; L-leucine from 3-methyl-2-oxobutanoate: step 2/4. Catalyzes the isomerization between 2-isopropylmalate and 3-isopropylmalate, via the formation of 2-isopropylmaleate. The chain is 3-isopropylmalate dehydratase small subunit from Serratia proteamaculans (strain 568).